The chain runs to 105 residues: Replication initiation control protein YabA (105 aa).

Residues His-79, Cys-81, Cys-95, and Cys-98 each coordinate Zn(2+).

Belongs to the YabA family. Homotetramer. Interacts with both DnaA and DnaN, acting as a bridge between these two proteins. Zn(2+) is required as a cofactor.

It is found in the cytoplasm. The protein resides in the nucleoid. Functionally, involved in control of chromosome replication initiation. Inhibits the cooperative binding of DnaA to the oriC region, thus negatively regulating initiation of chromosome replication. Inhibits the ability of DnaA-ATP to form a helix on DNA; does not disassemble preformed DnaA-DNA helices. Decreases the residence time of DnaA on the chromosome at its binding sites (oriC, replication forks and promoter-binding sites). Tethers DnaA to the replication machinery via the DNA polymerase beta sliding clamp subunit (dnaN). Associates with oriC and other DnaA targets on the chromosome in a DnaA-dependent manner. This chain is Replication initiation control protein YabA, found in Streptococcus sanguinis (strain SK36).